The sequence spans 335 residues: Ornithine carbamoyltransferase 2, catabolic (335 aa).

Residues 62 to 65, Q89, R113, and 140 to 143 each bind carbamoyl phosphate; these read STRT and HPTQ. L-ornithine-binding positions include N172, D236, and 240–241; that span reads SM. Residues 277–278 and R322 each bind carbamoyl phosphate; that span reads CL.

This sequence belongs to the aspartate/ornithine carbamoyltransferase superfamily. OTCase family.

The protein resides in the cytoplasm. It carries out the reaction carbamoyl phosphate + L-ornithine = L-citrulline + phosphate + H(+). It participates in amino-acid degradation; L-arginine degradation via ADI pathway; carbamoyl phosphate from L-arginine: step 2/2. In terms of biological role, reversibly catalyzes the transfer of the carbamoyl group from carbamoyl phosphate (CP) to the N(epsilon) atom of ornithine (ORN) to produce L-citrulline. In Staphylococcus epidermidis (strain ATCC 12228 / FDA PCI 1200), this protein is Ornithine carbamoyltransferase 2, catabolic (arcB2).